A 329-amino-acid chain; its full sequence is Succinylglutamate desuccinylase (329 aa).

Residues histidine 53, glutamate 56, and histidine 148 each coordinate Zn(2+). The active site involves glutamate 211.

This sequence belongs to the AspA/AstE family. Succinylglutamate desuccinylase subfamily. Requires Zn(2+) as cofactor.

It carries out the reaction N-succinyl-L-glutamate + H2O = L-glutamate + succinate. Its pathway is amino-acid degradation; L-arginine degradation via AST pathway; L-glutamate and succinate from L-arginine: step 5/5. Transforms N(2)-succinylglutamate into succinate and glutamate. The polypeptide is Succinylglutamate desuccinylase (Erwinia tasmaniensis (strain DSM 17950 / CFBP 7177 / CIP 109463 / NCPPB 4357 / Et1/99)).